A 372-amino-acid chain; its full sequence is Methylthioribose-1-phosphate isomerase (372 aa).

D252 (proton donor) is an active-site residue.

Belongs to the eIF-2B alpha/beta/delta subunits family. MtnA subfamily.

It is found in the cytoplasm. The protein localises to the nucleus. The catalysed reaction is 5-(methylsulfanyl)-alpha-D-ribose 1-phosphate = 5-(methylsulfanyl)-D-ribulose 1-phosphate. It functions in the pathway amino-acid biosynthesis; L-methionine biosynthesis via salvage pathway; L-methionine from S-methyl-5-thio-alpha-D-ribose 1-phosphate: step 1/6. Functionally, catalyzes the interconversion of methylthioribose-1-phosphate (MTR-1-P) into methylthioribulose-1-phosphate (MTRu-1-P). This is Methylthioribose-1-phosphate isomerase from Yarrowia lipolytica (strain CLIB 122 / E 150) (Yeast).